The primary structure comprises 217 residues: ATP phosphoribosyltransferase (217 aa).

Belongs to the ATP phosphoribosyltransferase family. Short subfamily. As to quaternary structure, heteromultimer composed of HisG and HisZ subunits.

Its subcellular location is the cytoplasm. The catalysed reaction is 1-(5-phospho-beta-D-ribosyl)-ATP + diphosphate = 5-phospho-alpha-D-ribose 1-diphosphate + ATP. The protein operates within amino-acid biosynthesis; L-histidine biosynthesis; L-histidine from 5-phospho-alpha-D-ribose 1-diphosphate: step 1/9. Functionally, catalyzes the condensation of ATP and 5-phosphoribose 1-diphosphate to form N'-(5'-phosphoribosyl)-ATP (PR-ATP). Has a crucial role in the pathway because the rate of histidine biosynthesis seems to be controlled primarily by regulation of HisG enzymatic activity. This is ATP phosphoribosyltransferase from Burkholderia vietnamiensis (strain G4 / LMG 22486) (Burkholderia cepacia (strain R1808)).